We begin with the raw amino-acid sequence, 333 residues long: NADH-quinone oxidoreductase subunit H (333 aa).

The next 8 helical transmembrane spans lie at 15-35 (FFIF…FVTY), 88-108 (FILA…VIPF), 117-137 (IGVG…GVVT), 159-179 (ISYE…AGSL), 191-211 (VWYI…AVAE), 239-259 (WAFF…LITV), 272-294 (GFIP…LIWF), and 313-333 (ILLP…ELFF).

The protein belongs to the complex I subunit 1 family. NDH-1 is composed of 14 different subunits. Subunits NuoA, H, J, K, L, M, N constitute the membrane sector of the complex.

The protein localises to the cell membrane. It catalyses the reaction a quinone + NADH + 5 H(+)(in) = a quinol + NAD(+) + 4 H(+)(out). NDH-1 shuttles electrons from NADH, via FMN and iron-sulfur (Fe-S) centers, to quinones in the respiratory chain. The immediate electron acceptor for the enzyme in this species is believed to be ubiquinone. Couples the redox reaction to proton translocation (for every two electrons transferred, four hydrogen ions are translocated across the cytoplasmic membrane), and thus conserves the redox energy in a proton gradient. This subunit may bind ubiquinone. This is NADH-quinone oxidoreductase subunit H from Bacillus mycoides (strain KBAB4) (Bacillus weihenstephanensis).